The primary structure comprises 276 residues: Diaminopimelate epimerase (276 aa).

Substrate contacts are provided by asparagine 13, glutamine 46, and asparagine 66. The active-site Proton donor is cysteine 75. Substrate contacts are provided by residues 76-77 (GN), asparagine 159, asparagine 192, and 210-211 (ER). The active-site Proton acceptor is cysteine 219. Substrate is bound at residue 220-221 (GT).

It belongs to the diaminopimelate epimerase family. As to quaternary structure, homodimer.

It localises to the cytoplasm. It catalyses the reaction (2S,6S)-2,6-diaminopimelate = meso-2,6-diaminopimelate. It functions in the pathway amino-acid biosynthesis; L-lysine biosynthesis via DAP pathway; DL-2,6-diaminopimelate from LL-2,6-diaminopimelate: step 1/1. Catalyzes the stereoinversion of LL-2,6-diaminopimelate (L,L-DAP) to meso-diaminopimelate (meso-DAP), a precursor of L-lysine and an essential component of the bacterial peptidoglycan. This Pseudomonas aeruginosa (strain UCBPP-PA14) protein is Diaminopimelate epimerase.